A 406-amino-acid polypeptide reads, in one-letter code: Odorant receptor 42a (406 aa).

Residues 1–44 lie on the Cytoplasmic side of the membrane; the sequence is MDLRRWFPTLYTQSKDSPVRSRDATLYLLRCVFLMGVRKPPAKF. A helical transmembrane segment spans residues 45–65; it reads FVAYVLWSFALNFCSTFYQPI. Residues 66–86 lie on the Extracellular side of the membrane; that stretch reads GFLTGYISHLSEFSPGEFLTS. The chain crosses the membrane as a helical span at residues 87 to 107; that stretch reads LQVAFNAWSCSTKVLIVWALV. The Cytoplasmic segment spans residues 108 to 142; that stretch reads KRFDEANNLLDEMDRRITDPGERLQIHRAVSLSNR. The chain crosses the membrane as a helical span at residues 143-163; sequence IFFFFMAVYMVYATNTFLSAI. The Extracellular portion of the chain corresponds to 164 to 181; sequence FIGRPPYQNYYPFLDWRS. The chain crosses the membrane as a helical span at residues 182 to 202; the sequence is STLHLALQAGLEYFAMAGACF. The Cytoplasmic segment spans residues 203 to 271; that stretch reads QDVCVDCYPV…DCLRPVISGT (69 aa). Residues 272 to 292 form a helical membrane-spanning segment; the sequence is IFVQFLVVGLVLGFTLINIVL. The Extracellular portion of the chain corresponds to 293-298; it reads FANLGS. The chain crosses the membrane as a helical span at residues 299 to 319; sequence AIAALSFMAAVLLETTPFCIL. At 320 to 359 the chain is on the cytoplasmic side; that stretch reads CNYLTEDCYKLADALFQSNWIDEEKRYQKTLMYFLQKLQQ. Residues 360–380 form a helical membrane-spanning segment; that stretch reads PITFMAMNVFPISVGTNISVT. The Extracellular portion of the chain corresponds to 381-406; the sequence is KFSFSVFTLVKQMNISEKLAKSEMEE. N394 carries N-linked (GlcNAc...) asparagine glycosylation.

This sequence belongs to the insect chemoreceptor superfamily. Heteromeric odorant receptor channel (TC 1.A.69) family. Or2a subfamily. In terms of assembly, interacts with Orco. Complexes exist early in the endomembrane system in olfactory sensory neurons (OSNs), coupling these complexes to the conserved ciliary trafficking pathway.

The protein localises to the cell membrane. Functionally, odorant receptor which mediates acceptance or avoidance behavior, depending on its substrates. The odorant receptor repertoire encodes a large collection of odor stimuli that vary widely in identity, intensity, and duration. May form a complex with Orco to form odorant-sensing units, providing sensitive and prolonged odorant signaling and calcium permeability. Involved in the behavioral responses to butanol, ethyl acetate, propyl acetate, and pentyl acetate. Also responds to pyrazines. This chain is Odorant receptor 42a (Or42a), found in Drosophila melanogaster (Fruit fly).